Here is a 275-residue protein sequence, read N- to C-terminus: Hydroxyethylthiazole kinase (275 aa).

M50 is a substrate binding site. ATP is bound by residues R126 and S171. Position 200 (A200) interacts with substrate.

This sequence belongs to the Thz kinase family. Requires Mg(2+) as cofactor.

The catalysed reaction is 5-(2-hydroxyethyl)-4-methylthiazole + ATP = 4-methyl-5-(2-phosphooxyethyl)-thiazole + ADP + H(+). It functions in the pathway cofactor biosynthesis; thiamine diphosphate biosynthesis; 4-methyl-5-(2-phosphoethyl)-thiazole from 5-(2-hydroxyethyl)-4-methylthiazole: step 1/1. Catalyzes the phosphorylation of the hydroxyl group of 4-methyl-5-beta-hydroxyethylthiazole (THZ). The sequence is that of Hydroxyethylthiazole kinase from Acinetobacter baumannii (strain SDF).